Here is a 338-residue protein sequence, read N- to C-terminus: Large ribosomal subunit protein uL10 (338 aa).

The disordered stretch occupies residues 303 to 338 (VEVSAAPAAEEEKEEEKKEEEKKEEDTGAAGLALLF). Residues 317 to 328 (EEKKEEEKKEED) are compositionally biased toward basic and acidic residues.

It belongs to the universal ribosomal protein uL10 family. As to quaternary structure, part of the 50S ribosomal subunit. Forms part of the ribosomal stalk which helps the ribosome interact with GTP-bound translation factors. Forms a heptameric L10(L12)2(L12)2(L12)2 complex, where L10 forms an elongated spine to which the L12 dimers bind in a sequential fashion.

Forms part of the ribosomal stalk, playing a central role in the interaction of the ribosome with GTP-bound translation factors. This chain is Large ribosomal subunit protein uL10, found in Methanocaldococcus jannaschii (strain ATCC 43067 / DSM 2661 / JAL-1 / JCM 10045 / NBRC 100440) (Methanococcus jannaschii).